The chain runs to 331 residues: Mycothiol acetyltransferase (331 aa).

Glu-33 is a 1D-myo-inositol 2-(L-cysteinylamino)-2-deoxy-alpha-D-glucopyranoside binding site. Residues 59 to 86 are compositionally biased toward low complexity; that stretch reads HAAEATAGSAASADPADPADPAAPADPA. The disordered stretch occupies residues 59–89; that stretch reads HAAEATAGSAASADPADPADPAAPADPADPA. 115-120 lines the acetyl-CoA pocket; it reads RRGHGS. The 149-residue stretch at 183–331 folds into the N-acetyltransferase domain; that stretch reads LRLDTFEESR…DVQLRATERG (149 aa). Positions 210, 249, and 261 each coordinate 1D-myo-inositol 2-(L-cysteinylamino)-2-deoxy-alpha-D-glucopyranoside. 265–267 lines the acetyl-CoA pocket; sequence VAT. Tyr-299 is a binding site for 1D-myo-inositol 2-(L-cysteinylamino)-2-deoxy-alpha-D-glucopyranoside. Residue 304–309 participates in acetyl-CoA binding; the sequence is NAPALR.

Belongs to the acetyltransferase family. MshD subfamily. In terms of assembly, monomer.

It catalyses the reaction 1D-myo-inositol 2-(L-cysteinylamino)-2-deoxy-alpha-D-glucopyranoside + acetyl-CoA = mycothiol + CoA + H(+). Functionally, catalyzes the transfer of acetyl from acetyl-CoA to desacetylmycothiol (Cys-GlcN-Ins) to form mycothiol. The polypeptide is Mycothiol acetyltransferase (Brachybacterium faecium (strain ATCC 43885 / DSM 4810 / JCM 11609 / LMG 19847 / NBRC 14762 / NCIMB 9860 / 6-10)).